Here is a 293-residue protein sequence, read N- to C-terminus: Probable xyloglucan endotransglucosylase/hydrolase protein 7 (293 aa).

Residues 1-29 (MVVSLFSSRNVFYTLSLCLFAALYQPVMS) form the signal peptide. The 194-residue stretch at 30-223 (RPAKFEDDFR…WSRAPFYAYY (194 aa)) folds into the GH16 domain. Glu109 functions as the Nucleophile in the catalytic mechanism. Glu113 (proton donor) is an active-site residue. Position 113 (Glu113) interacts with xyloglucan. Residue Asn117 is glycosylated (N-linked (GlcNAc...) asparagine). Xyloglucan is bound by residues 126–128 (QTN), 136–138 (DRE), 202–203 (DW), and Gly207. An N-linked (GlcNAc...) asparagine glycan is attached at Asn213. 2 cysteine pairs are disulfide-bonded: Cys231–Cys239 and Cys276–Cys289. Arg281 provides a ligand contact to xyloglucan.

The protein belongs to the glycosyl hydrolase 16 family. XTH group 1 subfamily. In terms of processing, contains at least one intrachain disulfide bond essential for its enzymatic activity.

The protein resides in the secreted. The protein localises to the cell wall. It is found in the extracellular space. It localises to the apoplast. It catalyses the reaction breaks a beta-(1-&gt;4) bond in the backbone of a xyloglucan and transfers the xyloglucanyl segment on to O-4 of the non-reducing terminal glucose residue of an acceptor, which can be a xyloglucan or an oligosaccharide of xyloglucan.. Its function is as follows. Catalyzes xyloglucan endohydrolysis (XEH) and/or endotransglycosylation (XET). Cleaves and religates xyloglucan polymers, an essential constituent of the primary cell wall, and thereby participates in cell wall construction of growing tissues. This is Probable xyloglucan endotransglucosylase/hydrolase protein 7 (XTH7) from Arabidopsis thaliana (Mouse-ear cress).